A 205-amino-acid chain; its full sequence is DNA-directed RNA polymerases IV and V subunit 4 (205 aa).

The segment at 1–79 (MSEKGGKGLK…TKSSKNSLHS (79 aa)) is disordered. Polar residues predominate over residues 48 to 60 (NVSSDQQPFQSSA).

The protein belongs to the eukaryotic RPB4 RNA polymerase subunit family. In terms of assembly, component of the RNA polymerase IV and V complexes. Interacts with NRPD1 and NRPE1. As to expression, expressed in shoot meristematic region and in root tips. Detected in cotyledons, flowers and young leaves.

The protein localises to the nucleus. Functionally, DNA-dependent RNA polymerase catalyzes the transcription of DNA into RNA using the four ribonucleoside triphosphates as substrates. Component of RNA polymerases IV and V which mediate short-interfering RNAs (siRNA) accumulation and subsequent RNA-directed DNA methylation-dependent (RdDM) transcriptional gene silencing (TGS) of endogenous repeated sequences, including transposable elements. Required for the de novo DNA methylation directed by the RdDM pathway. This Arabidopsis thaliana (Mouse-ear cress) protein is DNA-directed RNA polymerases IV and V subunit 4 (NRPD4).